The chain runs to 543 residues: Small conductance calcium-activated potassium channel protein 1 (543 aa).

A disordered region spans residues 1-92; that stretch reads MNSHSYNGSV…SGKPSNVGHR (92 aa). The segment covering 65–76 has biased composition (acidic residues); the sequence is DQDDDEDDEEDE. A helical membrane pass occupies residues 111–131; that stretch reads LIFGMFGIVVMVTETELSWGV. The chain crosses the membrane as a helical span at residues 140 to 160; that stretch reads FALKCLISLSTAILLGLVVLY. Residues 179 to 199 traverse the membrane as a helical segment; that stretch reads IAMTCERVFLISLELAVCAIH. The chain crosses the membrane as a helical span at residues 228 to 248; that stretch reads VLLSIPMFLRLYLLGRVMLLH. Residues 277 to 297 traverse the membrane as a helical segment; it reads LMTICPGTVLLVFSISSWIIA. Residues 317 to 337 constitute an intramembrane region (pore-forming); the sequence is FLGAMWLISITFLSIGYGDMV. The chain crosses the membrane as a helical span at residues 346–366; it reads VCLLTGIMGAGCTALVVAVVA. The calmodulin-binding stretch occupies residues 384 to 463; it reads DTQLTKRVKN…LTDLAKTQTV (80 aa). Residues 505 to 543 are disordered; that stretch reads QAIRPPPPPLPPRPGPGPQDQAARSSPCRWTPVAPSDCG. Residues 508–521 show a composition bias toward pro residues; the sequence is RPPPPPLPPRPGPG.

The protein belongs to the potassium channel KCNN family. KCa2.1/KCNN1 subfamily. Homodimer. Heteromultimer with KCNN2 and KCNN3. The complex is composed of 4 channel subunits each of which binds to a calmodulin subunit which regulates the channel activity through calcium-binding. Interacts with calmodulin.

Its subcellular location is the membrane. The protein localises to the cytoplasm. It localises to the myofibril. It is found in the sarcomere. The protein resides in the z line. The catalysed reaction is K(+)(in) = K(+)(out). With respect to regulation, inhibited by bee venom neurotoxin apamin. Inhibited by d-tubocurarine and tetraethylammonium (TEA). Small conductance calcium-activated potassium channel that mediates the voltage-independent transmembrane transfer of potassium across the cell membrane through a constitutive interaction with calmodulin which binds the intracellular calcium allowing its opening. The current is characterized by a voltage-independent activation, an intracellular calcium concentration increase-dependent activation and a single-channel conductance of about 3 picosiemens. Also presents an inwardly rectifying current, thus reducing its already small outward conductance of potassium ions, which is particularly the case when the membrane potential displays positive values, above + 20 mV. Activation is followed by membrane hyperpolarization. Thought to regulate neuronal excitability by contributing to the slow component of synaptic afterhyperpolarization. This is Small conductance calcium-activated potassium channel protein 1 from Homo sapiens (Human).